Consider the following 339-residue polypeptide: MKLAVIGGDGIGPEVTAEALKVLNAVRDDIEVTDYDLGARRYLRNGELLADADLVSLREHDAILLGAIGAPGEVPPGVLERGLLLKMRFALDHHVNLRPSKLYPTATSPLANPGDIDFVVVREGTEGLYCGNGGTLREGTPHEIASEVSQNTRYGVERVVRDAFERAQNRKKHLTLVHKTNVLVNAGGLWQRTVNEIATEYPEVTVDYNHIDAATIYMVTDPSRYDVIVTDNLFGDILTDLAGAVTGGIGLAASGNIDATGVNPSMFEPVHGSAPDIAGQGIADPTAAILSAAMLLRHVGDESNAQRIEAAVTYDVAERPAGPVKTVEVGDRIVAALQR.

Residues Arg-88, Arg-98, Arg-122, and Asp-212 each coordinate substrate. Residues Asp-212, Asp-236, and Asp-240 each contribute to the Mg(2+) site. NAD(+) is bound at residue 272–284 (GSAPDIAGQGIAD).

It belongs to the isocitrate and isopropylmalate dehydrogenases family. LeuB type 2 subfamily. In terms of assembly, homodimer. It depends on Mg(2+) as a cofactor. Requires Mn(2+) as cofactor.

The protein localises to the cytoplasm. The enzyme catalyses (2R,3S)-3-isopropylmalate + NAD(+) = 4-methyl-2-oxopentanoate + CO2 + NADH. It functions in the pathway amino-acid biosynthesis; L-leucine biosynthesis; L-leucine from 3-methyl-2-oxobutanoate: step 3/4. Its function is as follows. Catalyzes the oxidation of 3-carboxy-2-hydroxy-4-methylpentanoate (3-isopropylmalate) to 3-carboxy-4-methyl-2-oxopentanoate. The product decarboxylates to 4-methyl-2 oxopentanoate. This chain is 3-isopropylmalate dehydrogenase, found in Corynebacterium diphtheriae (strain ATCC 700971 / NCTC 13129 / Biotype gravis).